Consider the following 163-residue polypeptide: Dual specificity phosphatase 28 (163 aa).

The Tyrosine-protein phosphatase domain maps to 10-151; the sequence is PFARVAPALF…LQKYEQTLQA (142 aa). Residue Cys-95 is the Phosphocysteine intermediate of the active site.

The protein belongs to the protein-tyrosine phosphatase family. Non-receptor class dual specificity subfamily. As to quaternary structure, monomer.

It carries out the reaction O-phospho-L-tyrosyl-[protein] + H2O = L-tyrosyl-[protein] + phosphate. The enzyme catalyses O-phospho-L-seryl-[protein] + H2O = L-seryl-[protein] + phosphate. It catalyses the reaction O-phospho-L-threonyl-[protein] + H2O = L-threonyl-[protein] + phosphate. Functionally, has phosphatase activity with the synthetic substrate 6,8-difluoro-4-methylumbelliferyl phosphate (in vitro). Has almost no detectable activity with phosphotyrosine, even less activity with phosphothreonine and displays complete lack of activity with phosphoserine. The poor activity with phosphotyrosine may be due to steric hindrance by bulky amino acid sidechains that obstruct access to the active site. The polypeptide is Dual specificity phosphatase 28 (Dusp28) (Mus musculus (Mouse)).